The chain runs to 136 residues: Histone H3 (136 aa).

The disordered stretch occupies residues 1–43 (MARTKQTARKSTGGKAPRKQLATKAARKSAPASGGVKKPHRYR). N6,N6,N6-trimethyllysine; alternate occurs at positions 5 and 10. An N6,N6-dimethyllysine; alternate mark is found at Lys5 and Lys10. Residues Lys5 and Lys10 each carry the N6-acetyllysine; alternate modification. At Lys5 the chain carries N6-methyllysine; alternate. Ser11 bears the Phosphoserine mark. Lys15 and Lys24 each carry N6-acetyllysine. N6,N6,N6-trimethyllysine; alternate is present on Lys28. Lys28 is subject to N6,N6-dimethyllysine; alternate. Lys28 is modified (N6-methyllysine; alternate). Ser29 is modified (phosphoserine). N6,N6,N6-trimethyllysine; alternate is present on Lys37. Lys37 carries the post-translational modification N6,N6-dimethyllysine; alternate. Position 37 is an N6-methyllysine; alternate (Lys37). Lys80 carries the post-translational modification N6-methyllysine.

The protein belongs to the histone H3 family. The nucleosome is a histone octamer containing two molecules each of H2A, H2B, H3 and H4 assembled in one H3-H4 heterotetramer and two H2A-H2B heterodimers. The octamer wraps approximately 147 bp of DNA. Interacts (via N-terminal tail mono-acetylated on Lys-15) with swsn-4 (via Bromo domain); the interaction is direct. In terms of processing, phosphorylated at Ser-11 and Ser-29 during M phase. Phosphorylation of Ser-11 requires air-2 but not air-1. Dephosphorylated by gsp-1 and/or gsp-2 during chromosome segregation. Acetylation is generally linked to gene activation. Post-translationally, methylation at Lys-5 is linked to gene activation and is absent from male inactive X chromosome chromatin. Methylation at Lys-10 is linked to gene repression and is enriched in male inactive X chromosome chromatin. Methylation at Lys-37 occurs on the entire length of autosomes during meiotic prophase. Trimethylation at Lys-10 and Lys-37 is specifically antagonized by jmjd-2. Dimethylation and trimethylation at Lys-28 occurs in all nuclei. The mes-2-mes-3-mes-6 complex may be responsible for Lys-28 methylation in most of the germline and in the early embryo.

The protein resides in the nucleus. It is found in the chromosome. In terms of biological role, core component of nucleosome. Nucleosomes wrap and compact DNA into chromatin, limiting DNA accessibility to the cellular machineries which require DNA as a template. Histones thereby play a central role in transcription regulation, DNA repair, DNA replication and chromosomal stability. DNA accessibility is regulated via a complex set of post-translational modifications of histones, also called histone code, and nucleosome remodeling. In Caenorhabditis elegans, this protein is Histone H3 (his-2).